Reading from the N-terminus, the 380-residue chain is Cytochrome b (380 aa).

4 helical membrane-spanning segments follow: residues phenylalanine 33 to methionine 53, tryptophan 77 to isoleucine 98, tryptophan 113 to leucine 133, and phenylalanine 178 to leucine 198. 2 residues coordinate heme b: histidine 83 and histidine 97. Positions 182 and 196 each coordinate heme b. Histidine 201 provides a ligand contact to a ubiquinone. Transmembrane regions (helical) follow at residues tyrosine 226–serine 246, leucine 288–histidine 308, phenylalanine 320–glycine 340, and tyrosine 347–proline 367.

Belongs to the cytochrome b family. As to quaternary structure, the cytochrome bc1 complex contains 3 respiratory subunits (MT-CYB, CYC1 and UQCRFS1), 2 core proteins (UQCRC1 and UQCRC2) and probably 6 low-molecular weight proteins. The cofactor is heme b.

The protein resides in the mitochondrion inner membrane. Functionally, component of the ubiquinol-cytochrome c reductase complex (complex III or cytochrome b-c1 complex) that is part of the mitochondrial respiratory chain. The b-c1 complex mediates electron transfer from ubiquinol to cytochrome c. Contributes to the generation of a proton gradient across the mitochondrial membrane that is then used for ATP synthesis. The polypeptide is Cytochrome b (mt-cyb) (Apogon semilineatus (Half-lined cardinal)).